The chain runs to 547 residues: Glutamyl-tRNA(Gln) amidotransferase subunit B, mitochondrial (547 aa).

It belongs to the GatB/GatE family. GatB subfamily. Subunit of the heterotrimeric GatFAB amidotransferase (AdT) complex, composed of A, B and F subunits.

It localises to the mitochondrion. The enzyme catalyses L-glutamyl-tRNA(Gln) + L-glutamine + ATP + H2O = L-glutaminyl-tRNA(Gln) + L-glutamate + ADP + phosphate + H(+). Functionally, allows the formation of correctly charged Gln-tRNA(Gln) through the transamidation of misacylated Glu-tRNA(Gln) in the mitochondria. The reaction takes place in the presence of glutamine and ATP through an activated gamma-phospho-Glu-tRNA(Gln). The sequence is that of Glutamyl-tRNA(Gln) amidotransferase subunit B, mitochondrial from Lachancea thermotolerans (strain ATCC 56472 / CBS 6340 / NRRL Y-8284) (Yeast).